We begin with the raw amino-acid sequence, 166 residues long: Large ribosomal subunit protein uL10 (166 aa).

Belongs to the universal ribosomal protein uL10 family. As to quaternary structure, part of the ribosomal stalk of the 50S ribosomal subunit. The N-terminus interacts with L11 and the large rRNA to form the base of the stalk. The C-terminus forms an elongated spine to which L12 dimers bind in a sequential fashion forming a multimeric L10(L12)X complex.

Functionally, forms part of the ribosomal stalk, playing a central role in the interaction of the ribosome with GTP-bound translation factors. The protein is Large ribosomal subunit protein uL10 of Staphylococcus haemolyticus (strain JCSC1435).